Consider the following 94-residue polypeptide: Mitochondrial import receptor subunit TOM9-1 (94 aa).

Residues 1 to 48 (MAPKKIGAGKGDSSILAKISNYDIVSQGRRAACDAVYVSKKLLKSTGK) lie on the Cytoplasmic side of the membrane. The chain crosses the membrane as a helical span at residues 49–66 (AAWIAGTTFLILAVPLIL). Over 67-94 (ELEQDHRLGEIDFEQASLLGTPPVGAML) the chain is Mitochondrial intermembrane.

It belongs to the Tom22 family. In terms of assembly, forms part of the preprotein translocase complex of the outer mitochondrial membrane (TOM complex) which consists of at least 6 different proteins (TOM5, TOM6, TOM7, TOM20, TOM22/TOM9 and TOM40). In terms of tissue distribution, expressed in roots, flowers, young cotyledons and leaves.

The protein resides in the mitochondrion outer membrane. Functionally, central component of the receptor complex responsible for the recognition and translocation of cytosolically synthesized mitochondrial preproteins. Together with TOM20 functions as the transit peptide receptor at the surface of the mitochondrion outer membrane and facilitates the movement of preproteins into the translocation pore. The polypeptide is Mitochondrial import receptor subunit TOM9-1 (TOM9-1) (Arabidopsis thaliana (Mouse-ear cress)).